A 294-amino-acid polypeptide reads, in one-letter code: uncharacterized protein (294 aa).

Residues T43 and Y104 each act as charge relay system in the active site. Y130 (proton donor) is an active-site residue. Catalysis depends on K158, which acts as the Schiff-base intermediate with substrate.

It belongs to the DapA family. As to quaternary structure, homotetramer.

The protein resides in the cytoplasm. This is an uncharacterized protein from Pyrococcus abyssi (strain GE5 / Orsay).